The primary structure comprises 484 residues: tRNA sulfurtransferase (484 aa).

Residues 63–167 (QAFGERLACI…GDKLYMVTKR (105 aa)) form the THUMP domain. ATP-binding positions include 185-186 (LI), lysine 267, glycine 289, and glutamine 298. The cysteines at positions 346 and 458 are disulfide-linked. The Rhodanese domain maps to 406–484 (IDTNEVVIDI…GYHNVKVYRP (79 aa)). Cysteine 458 functions as the Cysteine persulfide intermediate in the catalytic mechanism.

It belongs to the ThiI family.

It is found in the cytoplasm. It carries out the reaction [ThiI sulfur-carrier protein]-S-sulfanyl-L-cysteine + a uridine in tRNA + 2 reduced [2Fe-2S]-[ferredoxin] + ATP + H(+) = [ThiI sulfur-carrier protein]-L-cysteine + a 4-thiouridine in tRNA + 2 oxidized [2Fe-2S]-[ferredoxin] + AMP + diphosphate. It catalyses the reaction [ThiS sulfur-carrier protein]-C-terminal Gly-Gly-AMP + S-sulfanyl-L-cysteinyl-[cysteine desulfurase] + AH2 = [ThiS sulfur-carrier protein]-C-terminal-Gly-aminoethanethioate + L-cysteinyl-[cysteine desulfurase] + A + AMP + 2 H(+). The protein operates within cofactor biosynthesis; thiamine diphosphate biosynthesis. Catalyzes the ATP-dependent transfer of a sulfur to tRNA to produce 4-thiouridine in position 8 of tRNAs, which functions as a near-UV photosensor. Also catalyzes the transfer of sulfur to the sulfur carrier protein ThiS, forming ThiS-thiocarboxylate. This is a step in the synthesis of thiazole, in the thiamine biosynthesis pathway. The sulfur is donated as persulfide by IscS. This Shewanella sp. (strain ANA-3) protein is tRNA sulfurtransferase.